The primary structure comprises 408 residues: Imidazolonepropionase (408 aa).

Residues histidine 66 and histidine 68 each contribute to the Fe(3+) site. Residues histidine 66 and histidine 68 each coordinate Zn(2+). Arginine 75, tyrosine 138, and histidine 171 together coordinate 4-imidazolone-5-propanoate. Tyrosine 138 lines the N-formimidoyl-L-glutamate pocket. Histidine 236 contributes to the Fe(3+) binding site. Histidine 236 is a Zn(2+) binding site. Glutamine 239 contributes to the 4-imidazolone-5-propanoate binding site. Residue aspartate 311 participates in Fe(3+) binding. Aspartate 311 provides a ligand contact to Zn(2+). Residues asparagine 313 and glycine 315 each coordinate N-formimidoyl-L-glutamate. Serine 316 contacts 4-imidazolone-5-propanoate.

It belongs to the metallo-dependent hydrolases superfamily. HutI family. The cofactor is Zn(2+). Fe(3+) is required as a cofactor.

Its subcellular location is the cytoplasm. It carries out the reaction 4-imidazolone-5-propanoate + H2O = N-formimidoyl-L-glutamate. Its pathway is amino-acid degradation; L-histidine degradation into L-glutamate; N-formimidoyl-L-glutamate from L-histidine: step 3/3. In terms of biological role, catalyzes the hydrolytic cleavage of the carbon-nitrogen bond in imidazolone-5-propanoate to yield N-formimidoyl-L-glutamate. It is the third step in the universal histidine degradation pathway. This chain is Imidazolonepropionase, found in Idiomarina loihiensis (strain ATCC BAA-735 / DSM 15497 / L2-TR).